The primary structure comprises 270 residues: Undecaprenyl-diphosphatase 1 (270 aa).

A run of 7 helical transmembrane segments spans residues 5–25 (YYILKYLILGLFQGLTEPIPI), 42–62 (IEGFSFELLVNSASLLAVLLI), 89–109 (FFFIIYLVIATIPAGVIGVLF), 117–137 (LKGVKMVGISLLITAVGLWII), 192–212 (FSFLLYIPVSLGGLLLSITDI), 220–240 (TLFVPYIVAFIATFIMTYISL), and 250–270 (GNLKYFSFYCIIVGVLTLIFL).

Belongs to the UppP family.

It is found in the cell membrane. The catalysed reaction is di-trans,octa-cis-undecaprenyl diphosphate + H2O = di-trans,octa-cis-undecaprenyl phosphate + phosphate + H(+). Catalyzes the dephosphorylation of undecaprenyl diphosphate (UPP). Confers resistance to bacitracin. This Bacillus cereus (strain ATCC 10987 / NRS 248) protein is Undecaprenyl-diphosphatase 1.